We begin with the raw amino-acid sequence, 343 residues long: MGRAPCCEKVGIKKGRWTAEEDRTLSDYIQSNGEGSWRSLPKNAGLKRCGKSCRLRWINYLRSDIKRGNITPEEEDVIVKLHSTLGTRWSTIASNLPGRTDNEIKNYWNSHLSRKLHGYFRKPTVANTVENAPPPPKRRPGRTSRSAMKPKFILNPKNHKTPNSFKANKSDIVLPTTTIENGEGDKEDALMVLSSSSLSGAEEPGLGPCGYGDDGDCNPSINGDDGALCLNDDIFDSCFLLDDSHAVHVSSCESNNVKNSEPYGGMSVGHKNIETMADDFVDWDFVWREGQTLWDEKEDLDSVLSRLLDGEEMESEIRQRDSNDFGEPLDIDEENKMAAWLLS.

2 consecutive HTH myb-type domains span residues 9–61 (KVGI…INYL) and 62–116 (RSDI…SRKL). DNA-binding regions (H-T-H motif) lie at residues 37–61 (WRSL…INYL) and 89–112 (WSTI…NSHL). The tract at residues 126 to 146 (ANTVENAPPPPKRRPGRTSRS) is disordered.

Expressed in seedlings, roots, cotyledons, leaves and apical meristems.

It localises to the nucleus. Modulates overall growth by reducing the proliferation activity of meristematic cells and delaying development. Flavonol-specific transcription activator involved in the regulation of several genes of flavonoid biosynthesis. Activates the expression of CHS, CHI, F3H and FLS1. Confers tolerance to UV-B. This Arabidopsis thaliana (Mouse-ear cress) protein is Transcription factor MYB11.